A 190-amino-acid polypeptide reads, in one-letter code: Segregation and condensation protein B (190 aa).

The protein belongs to the ScpB family. In terms of assembly, homodimer. Homodimerization may be required to stabilize the binding of ScpA to the Smc head domains. Component of a cohesin-like complex composed of ScpA, ScpB and the Smc homodimer, in which ScpA and ScpB bind to the head domain of Smc. The presence of the three proteins is required for the association of the complex with DNA.

The protein resides in the cytoplasm. Participates in chromosomal partition during cell division. May act via the formation of a condensin-like complex containing Smc and ScpA that pull DNA away from mid-cell into both cell halves. This Bacillus cereus (strain ZK / E33L) protein is Segregation and condensation protein B.